Consider the following 207-residue polypeptide: Acyl-homoserine-lactone synthase (207 aa).

This sequence belongs to the autoinducer synthase family.

The catalysed reaction is a fatty acyl-[ACP] + S-adenosyl-L-methionine = an N-acyl-L-homoserine lactone + S-methyl-5'-thioadenosine + holo-[ACP] + H(+). In terms of biological role, required for the synthesis of N-butanoyl-L-homoserine lactone (BHL), an autoinducer molecule which binds to AsaR. The protein is Acyl-homoserine-lactone synthase (asaI) of Aeromonas salmonicida.